Reading from the N-terminus, the 253-residue chain is Imidazole glycerol phosphate synthase subunit HisF (253 aa).

Active-site residues include D11 and D130.

This sequence belongs to the HisA/HisF family. As to quaternary structure, heterodimer of HisH and HisF.

It localises to the cytoplasm. It catalyses the reaction 5-[(5-phospho-1-deoxy-D-ribulos-1-ylimino)methylamino]-1-(5-phospho-beta-D-ribosyl)imidazole-4-carboxamide + L-glutamine = D-erythro-1-(imidazol-4-yl)glycerol 3-phosphate + 5-amino-1-(5-phospho-beta-D-ribosyl)imidazole-4-carboxamide + L-glutamate + H(+). Its pathway is amino-acid biosynthesis; L-histidine biosynthesis; L-histidine from 5-phospho-alpha-D-ribose 1-diphosphate: step 5/9. IGPS catalyzes the conversion of PRFAR and glutamine to IGP, AICAR and glutamate. The HisF subunit catalyzes the cyclization activity that produces IGP and AICAR from PRFAR using the ammonia provided by the HisH subunit. This chain is Imidazole glycerol phosphate synthase subunit HisF, found in Cereibacter sphaeroides (strain ATCC 17025 / ATH 2.4.3) (Rhodobacter sphaeroides).